The primary structure comprises 270 residues: (+)-cis,cis-nepetalactol synthase NEPS3 (270 aa).

Residues G21 to G27, D46 to Q48, D70 to V71, N97, Y165 to K169, and V198 to L202 each bind NAD(+).

This sequence belongs to the short-chain dehydrogenases/reductases (SDR) family. In terms of assembly, forms homotetramers.

It catalyses the reaction (S)-8-oxocitronellyl enol = cis-cis-nepetalactol. In terms of biological role, functions as a non-oxidoreductive cyclase to promote the formation of cis-cis-nepetalactol. Cis-cis-nepetalactol is then oxidized by NEPS1 into cis-cis-nepetalactone, which belongs to a family of metabolites that are both insect-repellent and have euphoric effect in cats. Binds NAD(+) as classical short-chain dehydrogenase/reductase (SDR), but does not utilize it for its redox-neutral cyclase activity. In Nepeta racemosa (Catmint), this protein is (+)-cis,cis-nepetalactol synthase NEPS3.